The primary structure comprises 492 residues: GTPase Der (492 aa).

2 EngA-type G domains span residues 3-167 (PVVA…PAPE) and 188-363 (ICIA…AQYA). GTP is bound by residues 9–16 (GRPNVGKS), 56–60 (DTGGF), 119–122 (NKVE), 194–201 (GRPNVGKS), 241–245 (DTAGI), and 306–309 (NKWD). The KH-like domain maps to 364–448 (YRINTGLLNR…PIRLLFRAKT (85 aa)). Residues 464–492 (VEKKEKKTTRRKKERKEQSRRKRVRDLKG) form a disordered region. A compositionally biased stretch (basic residues) spans 469–492 (KKTTRRKKERKEQSRRKRVRDLKG).

Belongs to the TRAFAC class TrmE-Era-EngA-EngB-Septin-like GTPase superfamily. EngA (Der) GTPase family. Associates with the 50S ribosomal subunit.

Its function is as follows. GTPase that plays an essential role in the late steps of ribosome biogenesis. In Desulforapulum autotrophicum (strain ATCC 43914 / DSM 3382 / VKM B-1955 / HRM2) (Desulfobacterium autotrophicum), this protein is GTPase Der.